Here is a 420-residue protein sequence, read N- to C-terminus: GDP-mannose transporter 2 (420 aa).

The segment covering 1–11 (MASYTPSSSRP) has biased composition (polar residues). The tract at residues 1 to 21 (MASYTPSSSRPHTPLGLSPRG) is disordered. Topologically, residues 1-76 (MASYTPSSSR…KAKKEEVCMP (76 aa)) are cytoplasmic. Residues 77–97 (ASTTVLPILSYCVASIMMTVV) traverse the membrane as a helical segment. Over 98–106 (NKFVVSGRQ) the chain is Lumenal. The helical transmembrane segment at 107-127 (FTMTFLLLAIQSFVCVACVWL) threads the bilayer. The Cytoplasmic segment spans residues 128-145 (AKRIGVINFRDWDMNDAK). The chain crosses the membrane as a helical span at residues 146–168 (AWFPVSSLLVAVIYTGSKSLQFL). The Lumenal segment spans residues 169 to 171 (SIP). A helical transmembrane segment spans residues 172–194 (VYTIFKNLTIILIAYGEVIWFGG). At 195 to 200 (HVTPLT) the chain is on the cytoplasmic side. The helical transmembrane segment at 201 to 223 (LCSFFLMVGSSVIAAWADISTTL) threads the bilayer. At 224–251 (SKLSAGVAVVDPISGADVPLSSISVMDT) the chain is on the lumenal side. A helical transmembrane segment spans residues 252 to 272 (MNVGYLWMFINCLASAGYVLF). Residues 273–293 (MRKRIKVTGFKDWDSMFYNNL) are Cytoplasmic-facing. A helical transmembrane segment spans residues 294–314 (LSIPVLFVFSLIIEDWGAASF). Over 315–323 (SRNFPEEGR) the chain is Lumenal. The chain crosses the membrane as a helical span at residues 324–344 (AFLLSAIAFSGAAAVFISYST). At 345-355 (AWCVRICGATT) the chain is on the cytoplasmic side. Residues 356 to 376 (YSLVGALNKLPVAASGILFFG) form a helical membrane-spanning segment. The Lumenal portion of the chain corresponds to 377-378 (DP). Residues 379–399 (VNFGNVSAILVGGVSGIVYAV) traverse the membrane as a helical segment. At 400-420 (AKTNQAKVEKSKQARGGESKA) the chain is on the cytoplasmic side.

It belongs to the TPT transporter family. SLC35D subfamily. As to quaternary structure, homooligomer.

It is found in the golgi apparatus membrane. The protein localises to the cytoplasmic vesicle membrane. The protein resides in the endoplasmic reticulum membrane. In terms of biological role, involved in the import of GDP-mannose from the cytoplasm into the Golgi lumen. In Cryptococcus neoformans var. neoformans serotype D (strain B-3501A) (Filobasidiella neoformans), this protein is GDP-mannose transporter 2 (GMT2).